The following is an 822-amino-acid chain: Fibroblast growth factor receptor 1 (822 aa).

Positions 1–21 (MWGWKCLLFWAVLVTATLCTA) are cleaved as a signal peptide. At 22-376 (RPAPTLPEQA…AVMTSPLYLE (355 aa)) the chain is on the extracellular side. One can recognise an Ig-like C2-type 1 domain in the interval 25–119 (PTLPEQAQPW…DTTYFSVNVS (95 aa)). Cys55 and Cys101 are oxidised to a cystine. Asn77 and Asn117 each carry an N-linked (GlcNAc...) asparagine glycan. The interval 120–162 (DALPSSEDDDDDDDSSSEEKETDNTKPNRRPVAPYWTSPEKME) is disordered. The segment covering 125–135 (SEDDDDDDDSS) has biased composition (acidic residues). Over residues 136-145 (SEEKETDNTK) the composition is skewed to basic and acidic residues. Ig-like C2-type domains follow at residues 158-246 (PEKM…YQLD) and 255-357 (PILQ…AWLT). Residues 160 to 177 (KMEKKLHAVPAAKTVKFK) form a heparin-binding region. A disulfide bridge links Cys178 with Cys230. 6 N-linked (GlcNAc...) asparagine glycosylation sites follow: Asn227, Asn240, Asn264, Asn296, Asn317, and Asn330. A disulfide bridge links Cys277 with Cys341. The chain crosses the membrane as a helical span at residues 377–397 (IIIYCTGAFLISCMLGSVIIY). At 398–822 (KMKSGTKKSD…QLANSGLKRR (425 aa)) the chain is on the cytoplasmic side. Tyr463 carries the phosphotyrosine; by autocatalysis modification. The Protein kinase domain maps to 478–767 (LVLGKPLGEG…VALTSNQEYL (290 aa)). ATP is bound by residues 484-490 (LGEGCFG), Lys514, 562-564 (EYA), and Asn568. Tyr583 and Tyr585 each carry phosphotyrosine; by autocatalysis. Asp623 serves as the catalytic Proton acceptor. 2 residues coordinate ATP: Arg627 and Asp641. 4 positions are modified to phosphotyrosine; by autocatalysis: Tyr653, Tyr654, Tyr730, and Tyr766. Over residues 782 to 792 (DTRSSTCSSGE) the composition is skewed to polar residues. The interval 782–822 (DTRSSTCSSGEDSVFSHEPLPEEPCLPRHPTQLANSGLKRR) is disordered.

Belongs to the protein kinase superfamily. Tyr protein kinase family. Fibroblast growth factor receptor subfamily. In terms of assembly, monomer. Homodimer after ligand binding. Interacts predominantly with FGF1 and FGF2, but can also interact with FGF3, FGF4, FGF5, FGF6, FGF8, FGF10, FGF19, FGF21, FGF22 and FGF23 (in vitro). Ligand specificity is determined by tissue-specific expression of isoforms, and differences in the third Ig-like domain are crucial for ligand specificity. Affinity for fibroblast growth factors (FGFs) is increased by heparan sulfate glycosaminoglycans that function as coreceptors. Likewise, KLB increases the affinity for FGF19, FGF21 and FGF23. Interacts (phosphorylated on Tyr-766) with PLCG1 (via SH2 domains). Interacts with FRS2. Interacts with RPS6KA1. Interacts (via C-terminus) with NEDD4 (via WW3 domain). Interacts with KL. Interacts with SHB (via SH2 domain). Interacts with GRB10. Interacts with ANOS1; this interaction does not interfere with FGF2-binding to FGFR1, but prevents binding of heparin-bound FGF2. Interacts with SOX2 and SOX3. Interacts with FLRT1, FLRT2 and FLRT3. Found in a ternary complex with FGF1 and ITGAV:ITGB3. In terms of processing, autophosphorylated. Binding of FGF family members together with heparan sulfate proteoglycan or heparin promotes receptor dimerization and autophosphorylation on tyrosine residues. Autophosphorylation occurs in trans between the two FGFR molecules present in the dimer and proceeds in a highly ordered manner. Initial autophosphorylation at Tyr-653 increases the kinase activity by a factor of 50 to 100. After this, Tyr-583 becomes phosphorylated, followed by phosphorylation of Tyr-463, Tyr-766, Tyr-583 and Tyr-585. In a third stage, Tyr-654 is autophosphorylated, resulting in a further tenfold increase of kinase activity. Phosphotyrosine residues provide docking sites for interacting proteins and so are crucial for FGFR1 function and its regulation. Ubiquitinated. FGFR1 is rapidly ubiquitinated by NEDD4 after autophosphorylation, leading to internalization and lysosomal degradation. CBL is recruited to activated FGFR1 via FRS2 and GRB2, and mediates ubiquitination and subsequent degradation of FGFR1. Post-translationally, N-glycosylated in the endoplasmic reticulum. The N-glycan chains undergo further maturation to an Endo H-resistant form in the Golgi apparatus. As to expression, widely expressed.

The protein localises to the cell membrane. Its subcellular location is the nucleus. It is found in the cytoplasm. It localises to the cytosol. The protein resides in the cytoplasmic vesicle. The catalysed reaction is L-tyrosyl-[protein] + ATP = O-phospho-L-tyrosyl-[protein] + ADP + H(+). Its activity is regulated as follows. Present in an inactive conformation in the absence of bound ligand. Ligand binding leads to dimerization and activation by sequential autophosphorylation on tyrosine residues. Tyrosine-protein kinase that acts as a cell-surface receptor for fibroblast growth factors and plays an essential role in the regulation of embryonic development, cell proliferation, differentiation and migration. Required for normal mesoderm patterning and correct axial organization during embryonic development, normal skeletogenesis and normal development of the gonadotropin-releasing hormone (GnRH) neuronal system. Phosphorylates PLCG1, FRS2, GAB1 and SHB. Ligand binding leads to the activation of several signaling cascades. Activation of PLCG1 leads to the production of the cellular signaling molecules diacylglycerol and inositol 1,4,5-trisphosphate. Phosphorylation of FRS2 triggers recruitment of GRB2, GAB1, PIK3R1 and SOS1, and mediates activation of RAS, MAPK1/ERK2, MAPK3/ERK1 and the MAP kinase signaling pathway, as well as of the AKT1 signaling pathway. Promotes phosphorylation of SHC1, STAT1 and PTPN11/SHP2. In the nucleus, enhances RPS6KA1 and CREB1 activity and contributes to the regulation of transcription. FGFR1 signaling is down-regulated by IL17RD/SEF, and by FGFR1 ubiquitination, internalization and degradation. The sequence is that of Fibroblast growth factor receptor 1 (Fgfr1) from Mus musculus (Mouse).